A 718-amino-acid chain; its full sequence is Sec-independent protein translocase protein TatCt (718 aa).

A run of 8 helical transmembrane segments spans residues 34-54 (VFIVFLVGFLGTFYALRLYVW), 84-104 (ILLQAKIGLVVGVLFALPPFI), 137-157 (LFAAGVAYGYFVFFPFTFAFL), 178-198 (FIFLLTLSFGLASQLPLAMTG), 214-231 (WRHAIVGIFAFGALFTPP), 234-254 (FTQIMWAVPVILLYAFSLYLA), 280-300 (LAGVGVVVGLLVYAFYEYGGV), and 325-345 (LGAFVVAGGFVGLAFGLAYLV). The disordered stretch occupies residues 421-451 (REAEAADAEDEPGELEDRTTRAGGAFVSELT). Residues 425-434 (AADAEDEPGE) are compositionally biased toward acidic residues. 6 helical membrane passes run 478–498 (AFWVVGWFMLVLATTFGWLYT), 539–559 (FSTILAVLATLPLVAYFVWPA), 572–592 (TVFVWTGALAGGLLGGFALGY), 621–641 (FFWLIFFTTAGIGLLADVPIL), 661–681 (EVTVFILAISAVFTPASITTM), and 682–702 (FMVTLPLMAAYGVGLGVLFVL).

It belongs to the TatC family. As to quaternary structure, forms a complex with TatA.

The protein resides in the cell membrane. In terms of biological role, part of the twin-arginine translocation (Tat) system that transports large folded proteins containing a characteristic twin-arginine motif in their signal peptide across membranes. In Haloferax volcanii (strain ATCC 29605 / DSM 3757 / JCM 8879 / NBRC 14742 / NCIMB 2012 / VKM B-1768 / DS2) (Halobacterium volcanii), this protein is Sec-independent protein translocase protein TatCt.